The sequence spans 414 residues: MDSPGQGEIARDSQGRPILDRYGRPVRVRPQPRQTPPTPRTPPVNETRVYQPRQTPPRQTPPRQTPPRQMPPRQTPPRQVPPQQQYQQPGQIGQVRPQPPVIAGDGGRRRKAISFKPRGCLGTIAGVLAVGLVLVFVVTLWADSKLNRVDATPATQVANTAGTNWLLVGSDSRQGLSDEDIERLGTGGDIGVGRTDTIMVLHMPRTGEPTLLSIPRDSYVNVPGWGMDKANAAFTVGGPELLTQTVEEATGLRIDHYAEIGMGGLANMVDAVGGVEMCPAEPMYDPLANLDIQAGCQEFDGAAALGYVRTRATALGDLDRVVRQREFFSALLSTATSPGTLLNPFRTFPMISNAVGTFTVGEGDHVWHLARLALAMRGGIVTETVPIASFADYDVGNVAIWDEAGAEALFSSMR.

Positions 1–108 are disordered; the sequence is MDSPGQGEIA…PPVIAGDGGR (108 aa). The Cytoplasmic segment spans residues 1–120; that stretch reads MDSPGQGEIA…KAISFKPRGC (120 aa). The segment covering 9–23 has biased composition (basic and acidic residues); that stretch reads IARDSQGRPILDRYG. Residues 33–42 show a composition bias toward pro residues; it reads RQTPPTPRTP. Over residues 43–53 the composition is skewed to low complexity; sequence PVNETRVYQPR. The segment covering 54 to 80 has biased composition (pro residues); it reads QTPPRQTPPRQTPPRQMPPRQTPPRQV. The helical transmembrane segment at 121 to 141 threads the bilayer; that stretch reads LGTIAGVLAVGLVLVFVVTLW. Residues 142–414 are Periplasmic-facing; it reads ADSKLNRVDA…GAEALFSSMR (273 aa).

The protein belongs to the LytR/CpsA/Psr (LCP) family.

The protein resides in the cell inner membrane. The polypeptide is Probable cell wall biosynthesis protein LcpB (Corynebacterium glutamicum (strain ATCC 13032 / DSM 20300 / JCM 1318 / BCRC 11384 / CCUG 27702 / LMG 3730 / NBRC 12168 / NCIMB 10025 / NRRL B-2784 / 534)).